A 435-amino-acid polypeptide reads, in one-letter code: Tumor necrosis factor receptor superfamily member 3 (435 aa).

The N-terminal stretch at 1-30 (MLLPWATSAPGLAWGPLVLGLFGLLAASQP) is a signal peptide. Over 31 to 227 (QAVPPYASEN…PPEMSGTMLM (197 aa)) the chain is Extracellular. An N-linked (GlcNAc...) asparagine glycan is attached at Asn-40. 4 TNFR-Cys repeats span residues 42–81 (TCRDQEKEYYEPQHRICCSRCPPGTYVSAKCSRIRDTVCA), 82–124 (TCAE…KTQC), 125–168 (RCQP…NHCV), and 169–211 (PCKA…TTCK). Disulfide bonds link Cys-43–Cys-58, Cys-59–Cys-72, Cys-62–Cys-80, Cys-83–Cys-98, Cys-101–Cys-116, Cys-104–Cys-124, Cys-126–Cys-132, Cys-139–Cys-148, Cys-142–Cys-167, and Cys-170–Cys-185. The N-linked (GlcNAc...) asparagine glycan is linked to Asn-177. Residues 228–248 (LAVLLPLAFFLLLATVFSCIW) form a helical membrane-spanning segment. The Cytoplasmic segment spans residues 249 to 435 (KSHPSLCRKL…GPRNQFITHD (187 aa)). Position 323 is a phosphoserine (Ser-323). The span at 373–399 (PGPGDLPATPEPPYPIPEEGDPGPPGL) shows a compositional bias: pro residues. Residues 373 to 435 (PGPGDLPATP…GPRNQFITHD (63 aa)) form a disordered region. The segment covering 403-417 (HQEDGKAWHLAETEH) has biased composition (basic and acidic residues). The span at 421 to 435 (TPSNRGPRNQFITHD) shows a compositional bias: polar residues.

As to quaternary structure, self-associates; dimerization and trimerization are promoted by lymphotoxin (LTA(1)-LTB(2)). Associates with TRAF3. Associates with TRAF4. Associates with TRAF5. Interacts with Aedes aegypti lymphotoxin beta receptor inhibitor; the interaction reduces dimerization and trimerization of LTBR induced by lymphotoxin (LTA(1)-LTB(2)). (Microbial infection) Interacts with HCV core protein.

The protein localises to the membrane. In terms of biological role, receptor for the heterotrimeric lymphotoxin containing LTA and LTB, and for TNFS14/LIGHT. Activates NF-kappa-B signaling pathway upon stimulation with lymphotoxin (LTA(1)-LTB(2)). Promotes apoptosis via TRAF3 and TRAF5. May play a role in the development of lymphoid organs. This is Tumor necrosis factor receptor superfamily member 3 (LTBR) from Homo sapiens (Human).